The primary structure comprises 668 residues: Envelope glycoprotein (668 aa).

The first 34 residues, 1–34 (MEGPTHPKPSKDKTFSWDLIILVGVLLRLDAGMA), serve as a signal peptide directing secretion. The Extracellular portion of the chain corresponds to 35 to 605 (NPSPHQVYNI…FNKSPWFTTL (571 aa)). Residues N43 and N58 are each glycosylated (N-linked (GlcNAc...) asparagine; by host). Disulfide bonds link C115-C132 and C124-C137. The interval 243-264 (PQAMGPNPVLPDQKPPSRQSQI) is disordered. N286, N322, and N327 each carry an N-linked (GlcNAc...) asparagine; by host glycan. 3 disulfide bridges follow: C332-C335, C332-C558, and C550-C557. Residues 332–335 (CWLC) carry the CXXC motif. N-linked (GlcNAc...) asparagine; by host glycosylation is found at N351, N354, N394, N410, and N430. The segment at 467–487 (PISLTVALMLGGITVGGMARN) is fusion peptide. 2 coiled-coil regions span residues 495 to 544 (LETA…ILFL) and 554 to 590 (KEECCFYADHTGLVRDNMAKLRERLKQRQQLFDSQQD). An immunosuppression region spans residues 533–549 (LQNRRGLDILFLQEGGL). Residues 550 to 558 (CTALKEECC) carry the CX6CC motif. A helical transmembrane segment spans residues 606 to 626 (ISSIMGPLMILLLILLFGPCI). The S-palmitoyl cysteine; by host moiety is linked to residue C625. Residues 627-668 (LNRLVQFVKDRISVVQTLVLTQQYQRLGQWRLRPTVSPQLNV) are Cytoplasmic-facing. The short motif at 650–653 (YQRL) is the YXXL motif; contains endocytosis signal element.

In terms of assembly, the mature envelope protein (Env) consists of a trimer of SU-TM heterodimers attached by a labile interchain disulfide bond. In terms of processing, specific enzymatic cleavages in vivo yield mature proteins. Envelope glycoproteins are synthesized as an inactive precursor that is N-glycosylated and processed likely by host cell furin or by a furin-like protease in the Golgi to yield the mature SU and TM proteins. The cleavage site between SU and TM requires the minimal sequence [KR]-X-[KR]-R. The R-peptide is released from the C-terminus of the cytoplasmic tail of the TM protein upon particle formation as a result of proteolytic cleavage by the viral protease. Cleavage of this peptide is required for TM to become fusogenic. The CXXC motif is highly conserved across a broad range of retroviral envelope proteins. It is thought to participate in the formation of a labile disulfide bond possibly with the CX6CC motif present in the transmembrane protein. Isomerization of the intersubunit disulfide bond to an SU intrachain disulfide bond is thought to occur upon receptor recognition in order to allow membrane fusion. Post-translationally, the transmembrane protein is palmitoylated. In terms of processing, the R-peptide is palmitoylated.

Its subcellular location is the virion membrane. It localises to the host cell membrane. In terms of biological role, the surface protein (SU) attaches the virus to the host cell by binding to its receptor. This interaction triggers the refolding of the transmembrane protein (TM) and is thought to activate its fusogenic potential by unmasking its fusion peptide. Fusion occurs at the host cell plasma membrane. The transmembrane protein (TM) acts as a class I viral fusion protein. Under the current model, the protein has at least 3 conformational states: pre-fusion native state, pre-hairpin intermediate state, and post-fusion hairpin state. During viral and target cell membrane fusion, the coiled coil regions (heptad repeats) assume a trimer-of-hairpins structure, positioning the fusion peptide in close proximity to the C-terminal region of the ectodomain. The formation of this structure appears to drive apposition and subsequent fusion of viral and target cell membranes. Membranes fusion leads to delivery of the nucleocapsid into the cytoplasm. The sequence is that of Envelope glycoprotein (env) from Felidae (cat family).